A 324-amino-acid chain; its full sequence is DNA repair and recombination protein RadA (324 aa).

114–121 is an ATP binding site; that stretch reads GEFGSGKT.

It belongs to the eukaryotic RecA-like protein family.

Involved in DNA repair and in homologous recombination. Binds and assemble on single-stranded DNA to form a nucleoprotein filament. Hydrolyzes ATP in a ssDNA-dependent manner and promotes DNA strand exchange between homologous DNA molecules. This is DNA repair and recombination protein RadA from Saccharolobus islandicus (strain Y.N.15.51 / Yellowstone #2) (Sulfolobus islandicus).